The following is a 504-amino-acid chain: MSIKAEEISSIIKQQIENYHSELKVSDVGTVTYIGDGIARAHGLDNAMAGELLEFSNGVMGMAQNLETNDVGIIILGPYTEIREGDEVRRTGKIMEVPVGEALIGRVVNSLGQPVDGLGPIETTGTRPIEAVAPGVMQRQSVNEPLQTGIKAIDALVPIGRGQRELIIGDRQTGKTSVAIDTILNQADQDMICIYVAIGQKESTVRNAVETLRHHGALDYTIVVTAAASQPAPLLYLAPYAGVAMAEEFMYNGKHVLVVYDDLSKQAAAYRELSLLLRRPPGREAYPGDVFYLHSRLLERAAKLNDSLGGGSITALPFVETQAGDISAYIPTNVISITDGQIFLQSDLFFSGVRPAINAGLSVSRVGGSAQIKAMKTVAGTLRLDLAAYRELESFSQFGSDLDAATRAKLERGKRTVEVLKQDLHKPLKVEKQVLILYALVHKYLDDVPVHDVLRFESEMNTWFDHNHPELLEEIRTTKKLPDEAKLEAALKEFKNTFVPSEEK.

169-176 provides a ligand contact to ATP; that stretch reads GDRQTGKT.

The protein belongs to the ATPase alpha/beta chains family. As to quaternary structure, F-type ATPases have 2 components, CF(1) - the catalytic core - and CF(0) - the membrane proton channel. CF(1) has five subunits: alpha(3), beta(3), gamma(1), delta(1), epsilon(1). CF(0) has three main subunits: a(1), b(2) and c(9-12). The alpha and beta chains form an alternating ring which encloses part of the gamma chain. CF(1) is attached to CF(0) by a central stalk formed by the gamma and epsilon chains, while a peripheral stalk is formed by the delta and b chains.

The protein localises to the cell membrane. The enzyme catalyses ATP + H2O + 4 H(+)(in) = ADP + phosphate + 5 H(+)(out). Functionally, produces ATP from ADP in the presence of a proton gradient across the membrane. The alpha chain is a regulatory subunit. This is ATP synthase subunit alpha 2 from Listeria monocytogenes serovar 1/2a (strain ATCC BAA-679 / EGD-e).